A 414-amino-acid chain; its full sequence is Probable aminotransferase TAT2 (414 aa).

Belongs to the class-I pyridoxal-phosphate-dependent aminotransferase family. Pyridoxal 5'-phosphate is required as a cofactor.

This is Probable aminotransferase TAT2 from Arabidopsis thaliana (Mouse-ear cress).